A 430-amino-acid chain; its full sequence is Asparagine--tRNA ligase (430 aa).

This sequence belongs to the class-II aminoacyl-tRNA synthetase family. As to quaternary structure, homodimer.

The protein resides in the cytoplasm. It carries out the reaction tRNA(Asn) + L-asparagine + ATP = L-asparaginyl-tRNA(Asn) + AMP + diphosphate + H(+). This is Asparagine--tRNA ligase from Listeria innocua serovar 6a (strain ATCC BAA-680 / CLIP 11262).